The chain runs to 237 residues: Putative N-acetylmannosamine-6-phosphate 2-epimerase (237 aa).

This sequence belongs to the NanE family.

The catalysed reaction is an N-acyl-D-glucosamine 6-phosphate = an N-acyl-D-mannosamine 6-phosphate. Its pathway is amino-sugar metabolism; N-acetylneuraminate degradation; D-fructose 6-phosphate from N-acetylneuraminate: step 3/5. Functionally, converts N-acetylmannosamine-6-phosphate (ManNAc-6-P) to N-acetylglucosamine-6-phosphate (GlcNAc-6-P). In Listeria monocytogenes serovar 1/2a (strain ATCC BAA-679 / EGD-e), this protein is Putative N-acetylmannosamine-6-phosphate 2-epimerase.